The following is a 157-amino-acid chain: uncharacterized protein (157 aa).

The helical transmembrane segment at 6 to 26 threads the bilayer; that stretch reads LVGGVLRVLVVVGAVFDVAVL. One can recognise a Ricin B-type lectin domain in the interval 33-157; that stretch reads ADGPVQLKSR…APDQQWDSVP (125 aa).

The protein localises to the membrane. This is an uncharacterized protein from Mycobacterium tuberculosis (strain CDC 1551 / Oshkosh).